The chain runs to 466 residues: Asparagine--tRNA ligase (466 aa).

It belongs to the class-II aminoacyl-tRNA synthetase family. As to quaternary structure, homodimer.

It is found in the cytoplasm. The enzyme catalyses tRNA(Asn) + L-asparagine + ATP = L-asparaginyl-tRNA(Asn) + AMP + diphosphate + H(+). The sequence is that of Asparagine--tRNA ligase from Vibrio cholerae serotype O1 (strain ATCC 39315 / El Tor Inaba N16961).